We begin with the raw amino-acid sequence, 161 residues long: Regulator of ribonuclease activity A (161 aa).

Belongs to the RraA family. In terms of assembly, homotrimer. Binds to both RNA-binding sites in the C-terminal region of Rne and to RhlB.

It is found in the cytoplasm. Functionally, globally modulates RNA abundance by binding to RNase E (Rne) and regulating its endonucleolytic activity. Can modulate Rne action in a substrate-dependent manner by altering the composition of the degradosome. Modulates RNA-binding and helicase activities of the degradosome. This chain is Regulator of ribonuclease activity A, found in Alteromonas mediterranea (strain DSM 17117 / CIP 110805 / LMG 28347 / Deep ecotype).